Here is a 303-residue protein sequence, read N- to C-terminus: Oxygen-dependent coproporphyrinogen-III oxidase (303 aa).

A substrate-binding site is contributed by S93. Residues H97 and H107 each coordinate a divalent metal cation. Catalysis depends on H107, which acts as the Proton donor. Position 109-111 (109-111) interacts with substrate; it reads NVR. A divalent metal cation is bound by residues H149 and H179. The tract at residues 244–279 is important for dimerization; it reads YVEFNLVFDRGTLFGLQSGGRTESILLSMPPLAQWR. 262–264 serves as a coordination point for substrate; that stretch reads GGR.

The protein belongs to the aerobic coproporphyrinogen-III oxidase family. As to quaternary structure, homodimer. Requires a divalent metal cation as cofactor.

It localises to the cytoplasm. The enzyme catalyses coproporphyrinogen III + O2 + 2 H(+) = protoporphyrinogen IX + 2 CO2 + 2 H2O. The protein operates within porphyrin-containing compound metabolism; protoporphyrin-IX biosynthesis; protoporphyrinogen-IX from coproporphyrinogen-III (O2 route): step 1/1. In terms of biological role, involved in the heme biosynthesis. Catalyzes the aerobic oxidative decarboxylation of propionate groups of rings A and B of coproporphyrinogen-III to yield the vinyl groups in protoporphyrinogen-IX. In Bordetella pertussis (strain Tohama I / ATCC BAA-589 / NCTC 13251), this protein is Oxygen-dependent coproporphyrinogen-III oxidase.